Here is a 288-residue protein sequence, read N- to C-terminus: Ribosomal protein L11 methyltransferase (288 aa).

Positions 141, 164, 186, and 227 each coordinate S-adenosyl-L-methionine.

Belongs to the methyltransferase superfamily. PrmA family.

It is found in the cytoplasm. It catalyses the reaction L-lysyl-[protein] + 3 S-adenosyl-L-methionine = N(6),N(6),N(6)-trimethyl-L-lysyl-[protein] + 3 S-adenosyl-L-homocysteine + 3 H(+). In terms of biological role, methylates ribosomal protein L11. This is Ribosomal protein L11 methyltransferase from Myxococcus xanthus (strain DK1622).